The primary structure comprises 591 residues: Putative BTB/POZ domain-containing protein At5g13600 (591 aa).

The BTB domain maps to 28 to 95 (PDVMIQVVDE…CYGVRIEVTP (68 aa)). In terms of domain architecture, NPH3 spans 208 to 493 (NWWFNDVSSF…VQVLFFEQMR (286 aa)). Tyr-434 carries the phosphotyrosine modification.

Belongs to the NPH3 family.

Its pathway is protein modification; protein ubiquitination. In terms of biological role, may act as a substrate-specific adapter of an E3 ubiquitin-protein ligase complex (CUL3-RBX1-BTB) which mediates the ubiquitination and subsequent proteasomal degradation of target proteins. The polypeptide is Putative BTB/POZ domain-containing protein At5g13600 (Arabidopsis thaliana (Mouse-ear cress)).